Consider the following 284-residue polypeptide: Probable plastid-lipid-associated protein 10, chloroplastic (284 aa).

The N-terminal 40 residues, 1–40 (MDRIASATFSCPAISLSRVCRISPFGLNIKTNHRKRFSCR), are a transit peptide targeting the chloroplast.

Belongs to the PAP/fibrillin family.

It is found in the plastid. The protein localises to the chloroplast. The protein resides in the plastoglobule. In Arabidopsis thaliana (Mouse-ear cress), this protein is Probable plastid-lipid-associated protein 10, chloroplastic (PAP10).